Consider the following 236-residue polypeptide: Ribitol-5-phosphate cytidylyltransferase (236 aa).

Residues 7–10 (LAGG) and 80–86 (GTDRNET) contribute to the CTP site.

Belongs to the IspD/TarI cytidylyltransferase family. TarI subfamily.

It carries out the reaction D-ribitol 5-phosphate + CTP + H(+) = CDP-L-ribitol + diphosphate. Its pathway is cell wall biogenesis; poly(ribitol phosphate) teichoic acid biosynthesis. Functionally, catalyzes the transfer of the cytidylyl group of CTP to D-ribitol 5-phosphate. The sequence is that of Ribitol-5-phosphate cytidylyltransferase from Listeria monocytogenes serovar 1/2a (strain ATCC BAA-679 / EGD-e).